A 452-amino-acid polypeptide reads, in one-letter code: Poly(A) polymerase I (452 aa).

Residues Asp-68, Asp-70, and Asp-150 contribute to the active site. Residues 427 to 452 (EQQRLHPKPKKKYYRPRRRKTTCSAE) are disordered. The span at 431-452 (LHPKPKKKYYRPRRRKTTCSAE) shows a compositional bias: basic residues.

Belongs to the tRNA nucleotidyltransferase/poly(A) polymerase family.

The catalysed reaction is RNA(n) + ATP = RNA(n)-3'-adenine ribonucleotide + diphosphate. Adds poly(A) tail to the 3' end of many RNAs, which usually targets these RNAs for decay. Plays a significant role in the global control of gene expression, through influencing the rate of transcript degradation, and in the general RNA quality control. The protein is Poly(A) polymerase I of Haemophilus influenzae (strain ATCC 51907 / DSM 11121 / KW20 / Rd).